Here is a 180-residue protein sequence, read N- to C-terminus: MIIFRRCVFINHRDFQVNEQIRDKEVRLIDQDGKQIGIMSAKEAYKIAQERHLDLVKIVPNANPPVCKLMDFGKYRYELSKREKEAKKKQKIINVKEIRMSPNIEDHDFGVKLKSAIKFLKDGDKVKVTIRFRGREAAHTSLAEDLLKRFAEELREYGNVEKAPSMDGRNMMMVIAPKKQ.

The protein belongs to the IF-3 family. Monomer.

It is found in the cytoplasm. In terms of biological role, IF-3 binds to the 30S ribosomal subunit and shifts the equilibrium between 70S ribosomes and their 50S and 30S subunits in favor of the free subunits, thus enhancing the availability of 30S subunits on which protein synthesis initiation begins. This chain is Translation initiation factor IF-3, found in Caldanaerobacter subterraneus subsp. tengcongensis (strain DSM 15242 / JCM 11007 / NBRC 100824 / MB4) (Thermoanaerobacter tengcongensis).